The chain runs to 479 residues: Dihydrolipoyl dehydrogenase (479 aa).

Residues 41–50, K59, A124, and 153–155 each bind FAD; these read EKRGALGGTC and TGS. The cysteines at positions 50 and 55 are disulfide-linked. NAD(+) is bound by residues 190–197, E213, I247, and G284; that span reads GGGVIGLE. Residues D325 and 332–335 contribute to the FAD site; that span reads MLAH. H458 serves as the catalytic Proton acceptor.

Belongs to the class-I pyridine nucleotide-disulfide oxidoreductase family. As to quaternary structure, homodimer. FAD is required as a cofactor.

It carries out the reaction N(6)-[(R)-dihydrolipoyl]-L-lysyl-[protein] + NAD(+) = N(6)-[(R)-lipoyl]-L-lysyl-[protein] + NADH + H(+). The sequence is that of Dihydrolipoyl dehydrogenase from Trypanosoma brucei brucei.